The chain runs to 507 residues: Maturase K (507 aa).

This sequence belongs to the intron maturase 2 family. MatK subfamily.

The protein resides in the plastid. Its subcellular location is the chloroplast. Its function is as follows. Usually encoded in the trnK tRNA gene intron. Probably assists in splicing its own and other chloroplast group II introns. This Annona muricata (Soursop) protein is Maturase K.